A 152-amino-acid chain; its full sequence is Deoxyuridine 5'-triphosphate nucleotidohydrolase (152 aa).

Substrate is bound by residues 71–73, N84, 88–90, and M98; these read RSG and LID.

This sequence belongs to the dUTPase family. The cofactor is Mg(2+).

It catalyses the reaction dUTP + H2O = dUMP + diphosphate + H(+). The protein operates within pyrimidine metabolism; dUMP biosynthesis; dUMP from dCTP (dUTP route): step 2/2. In terms of biological role, this enzyme is involved in nucleotide metabolism: it produces dUMP, the immediate precursor of thymidine nucleotides and it decreases the intracellular concentration of dUTP so that uracil cannot be incorporated into DNA. The polypeptide is Deoxyuridine 5'-triphosphate nucleotidohydrolase (Haemophilus ducreyi (strain 35000HP / ATCC 700724)).